Here is a 238-residue protein sequence, read N- to C-terminus: Ubiquinone biosynthesis O-methyltransferase (238 aa).

S-adenosyl-L-methionine contacts are provided by R39, G59, D80, and M124.

The protein belongs to the methyltransferase superfamily. UbiG/COQ3 family.

It catalyses the reaction a 3-demethylubiquinol + S-adenosyl-L-methionine = a ubiquinol + S-adenosyl-L-homocysteine + H(+). It carries out the reaction a 3-(all-trans-polyprenyl)benzene-1,2-diol + S-adenosyl-L-methionine = a 2-methoxy-6-(all-trans-polyprenyl)phenol + S-adenosyl-L-homocysteine + H(+). It functions in the pathway cofactor biosynthesis; ubiquinone biosynthesis. In terms of biological role, O-methyltransferase that catalyzes the 2 O-methylation steps in the ubiquinone biosynthetic pathway. The protein is Ubiquinone biosynthesis O-methyltransferase of Aeromonas salmonicida (strain A449).